A 128-amino-acid chain; its full sequence is Cytochrome c-type biogenesis protein CcmE (128 aa).

Topologically, residues 1–8 (MQKRVRNR) are cytoplasmic. Residues 9-29 (LITIIICFCSACLGISIILYN) form a helical; Signal-anchor for type II membrane protein membrane-spanning segment. Over 30–128 (LEKNIVFFLP…KHDENYRPPQ (99 aa)) the chain is Extracellular. Residues His-120 and Tyr-124 each contribute to the heme site.

It belongs to the CcmE/CycJ family.

Its subcellular location is the cell membrane. Its function is as follows. Heme chaperone required for the biogenesis of c-type cytochromes. Transiently binds heme delivered by CcmC and transfers the heme to apo-cytochromes in a process facilitated by CcmF and CcmH. The polypeptide is Cytochrome c-type biogenesis protein CcmE (Rickettsia africae (strain ESF-5)).